Here is a 183-residue protein sequence, read N- to C-terminus: MKFSLFFSVFFLAVLHACLSESEIDLEDEEHFMSSDSFLSEIQDESRGKTCIERNKECTNDRHGCCRGKIFKDKCTCVKSGKTEKCVCTQKKWAKIIESYIGDIPALPKPVDDKCVPKHADCSKRKDDCCKGGIFKYQCKCYDMYDDDGEKTDLCGCVSPVEHQAIEGALRIAKKLIGDRWGR.

The N-terminal stretch at 1 to 20 (MKFSLFFSVFFLAVLHACLS) is a signal peptide. The propeptide occupies 21–47 (ESEIDLEDEEHFMSSDSFLSEIQDESR). The Processing quadruplet motif signature appears at 44–47 (DESR). Intrachain disulfides connect Cys51–Cys66, Cys58–Cys75, Cys65–Cys88, Cys77–Cys86, Cys115–Cys130, Cys122–Cys139, Cys129–Cys157, and Cys141–Cys155. Positions 164–177 (QAIEGALRIAKKLI) are predicted alpha-helix. At Trp181 the chain carries Tryptophan amide.

The protein belongs to the neurotoxin 19 (CSTX) family. Double-CSTX subfamily. In terms of processing, cleavage of the propeptide depends on the processing quadruplet motif (XXXR, with at least one of X being E). In terms of tissue distribution, expressed by the venom gland.

The protein resides in the secreted. The protein localises to the target cell membrane. Its function is as follows. Spider venom toxin that exhibits cytolytic activity by forming an alpha-helix across the membrane. Lethal to insect larvae. Causes instant paralysis and death in the larvae of the flesh fly (S.carnaria) at doses of 20 ug/g, at doses of less than 10 ug/g causes reversible paralysis. Has cytolytic activity against insect Sf9 cells. Causes stable and irreversible depolarization of fly muscle fibers, leading to contracture at higher toxin concentrations. Destabilizes membranes. This Cheiracanthium punctorium (Yellow sac spider) protein is DELTA-miturgitoxin-Cp1c.